A 255-amino-acid chain; its full sequence is Ribosomal RNA small subunit methyltransferase A (255 aa).

The S-adenosyl-L-methionine site is built by asparagine 12, leucine 14, glycine 39, glutamate 60, aspartate 84, and asparagine 106.

The protein belongs to the class I-like SAM-binding methyltransferase superfamily. rRNA adenine N(6)-methyltransferase family. RsmA subfamily.

The protein resides in the cytoplasm. It catalyses the reaction adenosine(1518)/adenosine(1519) in 16S rRNA + 4 S-adenosyl-L-methionine = N(6)-dimethyladenosine(1518)/N(6)-dimethyladenosine(1519) in 16S rRNA + 4 S-adenosyl-L-homocysteine + 4 H(+). In terms of biological role, specifically dimethylates two adjacent adenosines (A1518 and A1519) in the loop of a conserved hairpin near the 3'-end of 16S rRNA in the 30S particle. May play a critical role in biogenesis of 30S subunits. The protein is Ribosomal RNA small subunit methyltransferase A of Herminiimonas arsenicoxydans.